Here is a 195-residue protein sequence, read N- to C-terminus: Rubrerythrin-1 (195 aa).

One can recognise a Ferritin-like diiron domain in the interval 3–150 (SLKGTKTAEN…ALLKNIEENK (148 aa)). Residues glutamate 20, glutamate 53, glutamate 98, glutamate 101, glutamate 132, histidine 135, cysteine 162, cysteine 165, cysteine 178, and cysteine 181 each contribute to the Fe(3+) site. One can recognise a Rubredoxin-like domain in the interval 157–191 (VKFWKCIKCGYIFEGKTAPKVCPACLHPQAYFEIL).

As to quaternary structure, homodimer. It depends on Fe(3+) as a cofactor.

It catalyses the reaction H2O2 + NADH + H(+) = NAD(+) + 2 H2O. Its activity is regulated as follows. Rubredoxin (Rd) increases the NADH consumption rate by serving as an intermediary electron-transfer shuttle between NROR and RubY. Functions as the terminal component of an NADH peroxidase (NADH:H(2)O(2) oxidoreductase) when using NADH:rubredoxin oxidoreductase (NROR) as the electron transport intermediary from NADH to RubY. The chain is Rubrerythrin-1 (rbr1) from Clostridium acetobutylicum (strain ATCC 824 / DSM 792 / JCM 1419 / IAM 19013 / LMG 5710 / NBRC 13948 / NRRL B-527 / VKM B-1787 / 2291 / W).